The chain runs to 373 residues: Queuine tRNA-ribosyltransferase (373 aa).

Residue Asp-94 is the Proton acceptor of the active site. Substrate-binding positions include 94-98, Asp-148, Gln-191, and Gly-218; that span reads DSGGF. The interval 249 to 255 is RNA binding; sequence GVGTPDY. Asp-268 acts as the Nucleophile in catalysis. The segment at 273–277 is RNA binding; important for wobble base 34 recognition; the sequence is TRIGR. Residues Cys-306, Cys-308, Cys-311, and His-337 each coordinate Zn(2+).

This sequence belongs to the queuine tRNA-ribosyltransferase family. Homodimer. Within each dimer, one monomer is responsible for RNA recognition and catalysis, while the other monomer binds to the replacement base PreQ1. Requires Zn(2+) as cofactor.

The enzyme catalyses 7-aminomethyl-7-carbaguanine + guanosine(34) in tRNA = 7-aminomethyl-7-carbaguanosine(34) in tRNA + guanine. Its pathway is tRNA modification; tRNA-queuosine biosynthesis. Functionally, catalyzes the base-exchange of a guanine (G) residue with the queuine precursor 7-aminomethyl-7-deazaguanine (PreQ1) at position 34 (anticodon wobble position) in tRNAs with GU(N) anticodons (tRNA-Asp, -Asn, -His and -Tyr). Catalysis occurs through a double-displacement mechanism. The nucleophile active site attacks the C1' of nucleotide 34 to detach the guanine base from the RNA, forming a covalent enzyme-RNA intermediate. The proton acceptor active site deprotonates the incoming PreQ1, allowing a nucleophilic attack on the C1' of the ribose to form the product. After dissociation, two additional enzymatic reactions on the tRNA convert PreQ1 to queuine (Q), resulting in the hypermodified nucleoside queuosine (7-(((4,5-cis-dihydroxy-2-cyclopenten-1-yl)amino)methyl)-7-deazaguanosine). This is Queuine tRNA-ribosyltransferase from Ruminiclostridium cellulolyticum (strain ATCC 35319 / DSM 5812 / JCM 6584 / H10) (Clostridium cellulolyticum).